A 74-amino-acid polypeptide reads, in one-letter code: UPF0154 protein LVIS_1358 (74 aa).

Residues 4-24 (WIWILIVIVVGLACAAGGFYG) traverse the membrane as a helical segment.

It belongs to the UPF0154 family.

The protein localises to the cell membrane. The polypeptide is UPF0154 protein LVIS_1358 (Levilactobacillus brevis (strain ATCC 367 / BCRC 12310 / CIP 105137 / JCM 1170 / LMG 11437 / NCIMB 947 / NCTC 947) (Lactobacillus brevis)).